Consider the following 855-residue polypeptide: DNA mismatch repair protein MutS (855 aa).

613–620 provides a ligand contact to ATP; it reads GPNMGGKS. Residues 796 to 817 are disordered; the sequence is TTSLPHEQPRAKPGKPAIPQQS.

It belongs to the DNA mismatch repair MutS family.

This protein is involved in the repair of mismatches in DNA. It is possible that it carries out the mismatch recognition step. This protein has a weak ATPase activity. This is DNA mismatch repair protein MutS from Pseudomonas syringae pv. tomato (strain ATCC BAA-871 / DC3000).